A 346-amino-acid chain; its full sequence is Putative D-alanine--D-lactate ligase (346 aa).

One can recognise an ATP-grasp domain in the interval 137 to 338; sequence YVVARSAGIA…LSEVIDRTLS (202 aa). ATP is bound at residue 163 to 216; it reads RLTYPVFVKPARSGSSFGVSKVCRPEDLATAVESARRYDTKVLIEAAVVGSEVG. Mg(2+) is bound by residues Asp292, Glu305, and Asn307.

It belongs to the D-alanine--D-alanine ligase family. Requires Mg(2+) as cofactor. Mn(2+) serves as cofactor.

The protein localises to the cell membrane. Required for resistance to glycopeptides antibiotics. D-Ala--D-Ala ligase of altered specificity which catalyzes ester bond formation between D-Ala and various D-hydroxy acids; producing a peptidoglycan which does not terminate by D-alanine but by D-lactate, thus preventing vancomycin binding. In Streptomyces coelicolor (strain ATCC BAA-471 / A3(2) / M145), this protein is Putative D-alanine--D-lactate ligase.